Reading from the N-terminus, the 185-residue chain is Homeobox expressed in ES cells 1 (185 aa).

Positions 108 to 167 (GRRPRTAFTQNQIEVLENVFRVNCYPGIDIREDLAQKLNLEEDRIQIWFQNRRAKLKRSH) form a DNA-binding region, homeobox.

Belongs to the ANF homeobox family. In terms of assembly, can form heterodimers with PROP1 in binding to DNA. Interacts with TLE1.

The protein resides in the nucleus. Required for the normal development of the forebrain, eyes and other anterior structures such as the olfactory placodes and pituitary gland. Possible transcriptional repressor. Binds to the palindromic PIII sequence, 5'-AGCTTGAGTCTAATTGAATTAACTGTAC-3'. HESX1 and PROP1 bind as heterodimers on this palindromic site, and, in vitro, HESX1 can antagonize PROP1 activation. The polypeptide is Homeobox expressed in ES cells 1 (HESX1) (Pan troglodytes (Chimpanzee)).